Reading from the N-terminus, the 520-residue chain is L-tyrosine:2-oxoglutarate aminotransferase amt1 (520 aa).

The protein belongs to the class-I pyridoxal-phosphate-dependent aminotransferase family. Pyridoxal 5'-phosphate serves as cofactor.

The catalysed reaction is L-tyrosine + 2-oxoglutarate = 3-(4-hydroxyphenyl)pyruvate + L-glutamate. It participates in secondary metabolite biosynthesis. In terms of biological role, an L-tyrosine:2-oxoglutarate aminotransferase (probably amt1) and atromentin synthetase nps3 catalyze consecutive steps to turn over L-tyrosine into atromentin, which represents the generic precursor molecule for the entire terphenylquinone and pulvinic acid family of pigments, which are widely distributed secondary metabolites in homobasidiomycetes. The first step catalyzed by amt1 converts L-tyrosine in to 4-hydroxyphenylpyruvate (4-HPP). Adenylation of two 4-HPP monomers by the nps3 adenylation (A) domain, covalent tethering of the monomers as a thioester and oxoester onto the nps3 thiolation (T) and thioesterase (TE) domains, respectively, and symmetric C-C-bond formation between two monomers catalyzed by the nps3 TE domain leads to atromentin. Follow-up products of atromentin in S.lacrymans include atromentic acid, xerocomic acid, isoxerocomic acid and variegatic acid. The chain is L-tyrosine:2-oxoglutarate aminotransferase amt1 (amt1) from Serpula lacrymans var. lacrymans (strain S7.9) (Dry rot fungus).